Consider the following 303-residue polypeptide: Serine/threonine-protein phosphatase PP-X homolog 2 (303 aa).

Mn(2+) contacts are provided by aspartate 51, histidine 53, aspartate 79, and asparagine 111. The active-site Proton donor is the histidine 112. Positions 161 and 235 each coordinate Mn(2+).

The protein belongs to the PPP phosphatase family. PP-4 (PP-X) subfamily. It depends on Mn(2+) as a cofactor.

It carries out the reaction O-phospho-L-seryl-[protein] + H2O = L-seryl-[protein] + phosphate. The catalysed reaction is O-phospho-L-threonyl-[protein] + H2O = L-threonyl-[protein] + phosphate. The polypeptide is Serine/threonine-protein phosphatase PP-X homolog 2 (Ppx2) (Paramecium tetraurelia).